A 179-amino-acid chain; its full sequence is Large ribosomal subunit protein uL6 (179 aa).

The protein belongs to the universal ribosomal protein uL6 family. Part of the 50S ribosomal subunit.

Functionally, this protein binds to the 23S rRNA, and is important in its secondary structure. It is located near the subunit interface in the base of the L7/L12 stalk, and near the tRNA binding site of the peptidyltransferase center. The chain is Large ribosomal subunit protein uL6 from Buchnera aphidicola subsp. Baizongia pistaciae (strain Bp).